A 182-amino-acid polypeptide reads, in one-letter code: Large ribosomal subunit protein uL6 (182 aa).

This sequence belongs to the universal ribosomal protein uL6 family. As to quaternary structure, part of the 50S ribosomal subunit.

In terms of biological role, this protein binds to the 23S rRNA, and is important in its secondary structure. It is located near the subunit interface in the base of the L7/L12 stalk, and near the tRNA binding site of the peptidyltransferase center. The polypeptide is Large ribosomal subunit protein uL6 (Karelsulcia muelleri (strain GWSS) (Sulcia muelleri)).